We begin with the raw amino-acid sequence, 372 residues long: Protein zntB (372 aa).

3 helical membrane passes run 15–35, 42–62, and 70–90; these read LIMC…VIFI, LLGH…FMDL, and IGFY…AVIL. The disordered stretch occupies residues 99–166; sequence ESGDSNHAHS…IAKSKNKKKS (68 aa). Residues 114-124 show a composition bias toward basic and acidic residues; it reads IEKHSSEKKEV. Residues 133-167 adopt a coiled-coil conformation; that stretch reads NGKDKKQKQQKQKQQKQQQQQKQNIAKSKNKKKSK. Residues 137-146 show a composition bias toward basic residues; the sequence is KKQKQQKQKQ. Low complexity predominate over residues 147–159; that stretch reads QKQQQQQKQNIAK. The next 5 membrane-spanning stretches (helical) occupy residues 170–192, 207–229, 237–257, 271–291, and 301–321; these read YLNS…EGVA, LMLA…IFSA, FKYC…FGLI, LAAV…PAAF, and FSNI…HSML. Residues 328–372 form a disordered region; the sequence is AGDGGHGHSHGGHGHSHGHGHSHGGHSHDSQHVESPQSSSFNAFA. Residues 334-352 show a composition bias toward basic residues; the sequence is GHSHGGHGHSHGHGHSHGG. Residues 360–372 show a composition bias toward polar residues; it reads VESPQSSSFNAFA.

Belongs to the ZIP transporter (TC 2.A.5) family. ZupT subfamily.

Its subcellular location is the membrane. In terms of biological role, may transport divalent cations. May participate, with dstA, in the regulation of the differentiation of stalk cells during development. The sequence is that of Protein zntB (zntB) from Dictyostelium discoideum (Social amoeba).